A 148-amino-acid polypeptide reads, in one-letter code: MKRTLMAFLLLGGLALAQADGAKIYAQCAGCHQQNGQGIPGAFPPLAGHVAEILAKEGGREYLILVLLYGLQGQIEVKGMKYNGVMSSFAQLKDEEIAAVLNHIATAWGDAKKVKGFKPFTAEEVKKLRAKKLTPQQVLAERKKLGLK.

An N-terminal signal peptide occupies residues 1-17; that stretch reads MKRTLMAFLLLGGLALA. At Q18 the chain carries Pyrrolidone carboxylic acid. Heme c-binding residues include C28, C31, H32, and M86.

Post-translationally, binds 1 heme c group covalently per subunit.

Its function is as follows. This monoheme basic protein appears to function as an electron donor to cytochrome oxidase in T.thermophilus. The polypeptide is Cytochrome c-552 (cycA) (Thermus thermophilus (strain ATCC 27634 / DSM 579 / HB8)).